The sequence spans 138 residues: Cellular retinoic acid-binding protein 2 (138 aa).

Positions 21–31 (KVLGVNVMLRK) match the Nuclear localization signal motif. Residue lysine 102 forms a Glycyl lysine isopeptide (Lys-Gly) (interchain with G-Cter in SUMO) linkage. Residue 133–135 (RVY) coordinates all-trans-retinoate.

Belongs to the calycin superfamily. Fatty-acid binding protein (FABP) family. As to quaternary structure, interacts with importin alpha, RXR and RARA. Post-translationally, sumoylated in response to retinoic acid binding, sumoylation is critical for dissociation from ER and subsequent nuclear translocation.

It localises to the cytoplasm. It is found in the endoplasmic reticulum. The protein localises to the nucleus. Functionally, transports retinoic acid to the nucleus. Regulates the access of retinoic acid to the nuclear retinoic acid receptors. The polypeptide is Cellular retinoic acid-binding protein 2 (CRABP2) (Bos taurus (Bovine)).